Here is a 469-residue protein sequence, read N- to C-terminus: ATP synthase subunit beta (469 aa).

157–164 (GGAGVGKT) contributes to the ATP binding site.

Belongs to the ATPase alpha/beta chains family. F-type ATPases have 2 components, CF(1) - the catalytic core - and CF(0) - the membrane proton channel. CF(1) has five subunits: alpha(3), beta(3), gamma(1), delta(1), epsilon(1). CF(0) has three main subunits: a(1), b(2) and c(9-12). The alpha and beta chains form an alternating ring which encloses part of the gamma chain. CF(1) is attached to CF(0) by a central stalk formed by the gamma and epsilon chains, while a peripheral stalk is formed by the delta and b chains.

It is found in the cell membrane. The enzyme catalyses ATP + H2O + 4 H(+)(in) = ADP + phosphate + 5 H(+)(out). Produces ATP from ADP in the presence of a proton gradient across the membrane. The catalytic sites are hosted primarily by the beta subunits. The chain is ATP synthase subunit beta from Brevibacillus brevis (strain 47 / JCM 6285 / NBRC 100599).